Reading from the N-terminus, the 444-residue chain is NADH-dependent flavin oxidoreductase nadA (444 aa).

FMN is bound by residues 37-40 (ERMC) and Q123. Positions 127-149 (PGRQTPSHRQPEPISASDVPLDT) are disordered. 192 to 195 (HAAH) contributes to the substrate binding site. FMN is bound at residue 345–346 (AR).

It belongs to the NADH:flavin oxidoreductase/NADH oxidase family.

Its subcellular location is the cytoplasm. The protein localises to the cytosol. Its function is as follows. NADH-dependent flavin oxidoreductase; part of the gene cluster that mediates the biosynthesis of aflatoxins, a group of polyketide-derived furanocoumarins, and part of the most toxic and carcinogenic compounds among the known mycotoxins. The four major aflatoxins produced by A.parasiticus are aflatoxin B1 (AFB1), aflatoxin B2 (AFB2), aflatoxin G1 (AFG1) and aflatoxin G2 (AFG2). Within the aflatoxin pathway, the NADH-dependent flavin oxidoreductase nadA is specifically required for the last steps in which OMST is converted specifically to aflatoxin G1. The biosynthesis of aflatoxins begins with the norsolorinic acid synthase aflC that combines a hexanoyl starter unit produced by the fatty acid synthase aflA/aflB and 7 malonyl-CoA extender units to synthesize the precursor NOR. The second step is the conversion of NOR to averantin and requires the norsolorinic acid ketoreductase aflD, which catalyzes the dehydration of norsolorinic acid to form (1'S)-averantin. The norsolorinic acid reductases aflE and aflF may also play a role in the conversion of NOR to AVN. The cytochrome P450 monooxygenase aflG then catalyzes the hydroxylation of AVN to 5'hydroxyaverantin (HAVN). The next step is performed by the 5'-hydroxyaverantin dehydrogenase aflH that transforms HAVN to 5'-oxoaverantin (OAVN) which is further converted to averufin (AVF) by aflK that plays a dual role in the pathway, as a 5'-oxoaverantin cyclase that mediates conversion of 5'-oxoaverantin, as well as a versicolorin B synthase in a later step in the pathway. The averufin oxidase aflI catalyzes the conversion of AVF to versiconal hemiacetal acetate (VHA). VHA is then the substrate for the versiconal hemiacetal acetate esterase aflJ to yield versiconal (VAL). Versicolorin B synthase aflK then converts VAL to versicolorin B (VERB) by closing the bisfuran ring of aflatoxin which is required for DNA-binding, thus giving to aflatoxin its activity as a mutagen. Then, the activity of the versicolorin B desaturase aflL leads to versicolorin A (VERA). A branch point starts from VERB since it can also be converted to dihydrodemethylsterigmatocystin (DMDHST), probably also by aflL, VERA being a precursor for aflatoxins B1 and G1, and DMDHST for aflatoxins B2 and G2. Next, the versicolorin reductase aflM and the cytochrome P450 monooxygenase aflN are involved in conversion of VERA to demethylsterigmatocystin (DMST). AflX and aflY seem also involved in this step, through probable aflX-mediated epoxide ring-opening step following versicolorin A oxidation and aflY-mediated Baeyer-Villiger oxidation required for the formation of the xanthone ring. The methyltransferase aflO then leads to the modification of DMST to sterigmatocystin (ST), and of DMDHST to dihydrosterigmatocystin (DHST). Both ST and DHST are then substrates of the O-methyltransferase aflP to yield O-methylsterigmatocystin (OMST) and dihydro-O-methylsterigmatocystin (DHOMST), respectively. Finally OMST is converted to aflatoxins B1 and G1, and DHOMST to aflatoxins B2 and G2, via the action of several enzymes including O-methylsterigmatocystin oxidoreductase aflQ, the cytochrome P450 monooxygenase aflU, but also the NADH-dependent flavin oxidoreductase nadA which is specifically required for the synthesis of AFG1. This chain is NADH-dependent flavin oxidoreductase nadA, found in Aspergillus parasiticus (strain ATCC 56775 / NRRL 5862 / SRRC 143 / SU-1).